Here is a 291-residue protein sequence, read N- to C-terminus: Foldase protein PrsA 2 (291 aa).

A signal peptide spans 1–20; that stretch reads MKKKLILGLVMMMALFSLAA. Cysteine 21 carries N-palmitoyl cysteine lipidation. A lipid anchor (S-diacylglycerol cysteine) is attached at cysteine 21. Positions 135 to 226 constitute a PpiC domain; that stretch reads QPDITVSHIL…YGYHIIQMDK (92 aa).

This sequence belongs to the PrsA family.

It localises to the cell membrane. It carries out the reaction [protein]-peptidylproline (omega=180) = [protein]-peptidylproline (omega=0). Its function is as follows. Plays a major role in protein secretion by helping the post-translocational extracellular folding of several secreted proteins. This chain is Foldase protein PrsA 2 (prsA2), found in Listeria innocua serovar 6a (strain ATCC BAA-680 / CLIP 11262).